Reading from the N-terminus, the 265-residue chain is Aquaporin-5 (265 aa).

Over 1–12 (MKKEVCSAAFLK) the chain is Cytoplasmic. Residues 13 to 33 (AVFAEFLATLIFVFFGLGSAL) traverse the membrane as a helical segment. The Extracellular portion of the chain corresponds to 34 to 39 (KWPSAM). The chain crosses the membrane as a helical span at residues 40 to 60 (PSVLQISLAFGLAIGTMAQAL). The Cytoplasmic portion of the chain corresponds to 61–65 (GPVSG). The segment at residues 66–74 (GHMNPAITL) is an intramembrane region (discontinuously helical). Positions 69 to 71 (NPA) match the NPA 1 motif. At 75-87 (ALLVGNQISLLRA) the chain is on the cytoplasmic side. The helical transmembrane segment at 88–108 (VFYLVAQLVGAIAGAAILYGL) threads the bilayer. Residues 109-126 (APYNARSNLAVNALNNNT) lie on the Extracellular side of the membrane. N-linked (GlcNAc...) asparagine glycosylation is found at Asn-124 and Asn-125. The chain crosses the membrane as a helical span at residues 127–147 (TAGQAVVAEMILTFQLALCVF). Residues 148 to 158 (SSTDSRRTSPV) lie on the Cytoplasmic side of the membrane. A helical membrane pass occupies residues 159–179 (GSPALSIGLSVTLGHLVGIYF). Position 180 (Thr-180) is a topological domain, extracellular. The discontinuously helical intramembrane region spans 181–191 (GCSMNPARSFG). Positions 185–187 (NPA) match the NPA 2 motif. Residues 192 to 203 (PAVIMSRFSSAH) lie on the Extracellular side of the membrane. A helical transmembrane segment spans residues 204 to 224 (WVFWVGPIVGAATAAIIYFYL). Over 225–265 (LFPHSLSLSDRVAILKGTYEPDEDWEESQEERKKTMELTAH) the chain is Cytoplasmic.

This sequence belongs to the MIP/aquaporin (TC 1.A.8) family. Homotetramer; each monomer provides an independent water pore. Interacts with TRPV4; the interaction is probably indirect and regulates TRPV4 activation by hypotonicity.

Its subcellular location is the apical cell membrane. The protein resides in the cell membrane. It localises to the cytoplasmic vesicle membrane. The enzyme catalyses H2O(in) = H2O(out). Its function is as follows. Aquaporins form homotetrameric transmembrane channels, with each monomer independently mediating water transport across the plasma membrane along its osmotic gradient. Plays an important role in fluid secretion in salivary glands. Required for TRPV4 activation by hypotonicity. Together with TRPV4, controls regulatory volume decrease in salivary epithelial cells. Seems to play a redundant role in water transport in the eye, lung and in sweat glands. The chain is Aquaporin-5 from Ovis aries (Sheep).